A 246-amino-acid polypeptide reads, in one-letter code: 5-oxoprolinase subunit A (246 aa).

Belongs to the LamB/PxpA family. Forms a complex composed of PxpA, PxpB and PxpC.

The enzyme catalyses 5-oxo-L-proline + ATP + 2 H2O = L-glutamate + ADP + phosphate + H(+). Functionally, catalyzes the cleavage of 5-oxoproline to form L-glutamate coupled to the hydrolysis of ATP to ADP and inorganic phosphate. In Vibrio cholerae serotype O1 (strain M66-2), this protein is 5-oxoprolinase subunit A.